A 430-amino-acid chain; its full sequence is Dihydroorotase (430 aa).

Zn(2+)-binding residues include His61 and His63. Residues 63–65 and Asn95 contribute to the substrate site; that span reads HLR. Zn(2+) contacts are provided by Asp153, His180, and His233. Asn279 serves as a coordination point for substrate. Asp306 contributes to the Zn(2+) binding site. Asp306 is an active-site residue. Substrate-binding positions include His310 and 324–325; that span reads FG.

The protein belongs to the metallo-dependent hydrolases superfamily. DHOase family. Class I DHOase subfamily. The cofactor is Zn(2+).

It catalyses the reaction (S)-dihydroorotate + H2O = N-carbamoyl-L-aspartate + H(+). The protein operates within pyrimidine metabolism; UMP biosynthesis via de novo pathway; (S)-dihydroorotate from bicarbonate: step 3/3. In terms of biological role, catalyzes the reversible cyclization of carbamoyl aspartate to dihydroorotate. The polypeptide is Dihydroorotase (Lactiplantibacillus plantarum (strain ATCC BAA-793 / NCIMB 8826 / WCFS1) (Lactobacillus plantarum)).